The sequence spans 281 residues: Small ribosomal subunit protein uS3 (281 aa).

One can recognise a KH type-2 domain in the interval 38-106; that stretch reads IRRLLSTGLE…QVQLNILEVK (69 aa). Residues 218-281 are disordered; sequence APAGAERARR…VTHEPQIAES (64 aa). Residues 238–256 are compositionally biased toward low complexity; it reads SGAAGTTVTGTDAGRAVGG.

It belongs to the universal ribosomal protein uS3 family. Part of the 30S ribosomal subunit. Forms a tight complex with proteins S10 and S14.

Functionally, binds the lower part of the 30S subunit head. Binds mRNA in the 70S ribosome, positioning it for translation. In Mycobacterium leprae (strain Br4923), this protein is Small ribosomal subunit protein uS3.